We begin with the raw amino-acid sequence, 485 residues long: ETS translocation variant 4 (485 aa).

A Glycyl lysine isopeptide (Lys-Gly) (interchain with G-Cter in SUMO2) cross-link involves residue Lys-6. Disordered regions lie at residues 79 to 114 (PDFHSENSFHSPTTRIKKEPQSPRTDPALSCSRKPP) and 135 to 214 (IAIK…QHQL). Lys-95 participates in a covalent cross-link: Glycyl lysine isopeptide (Lys-Gly) (interchain with G-Cter in SUMO). Residue Ser-100 is modified to Phosphoserine. A Glycyl lysine isopeptide (Lys-Gly) (interchain with G-Cter in SUMO2) cross-link involves residue Lys-138. A phosphoserine mark is found at Ser-139 and Ser-148. Over residues 158–171 (QQQSLLRASSSSQS) the composition is skewed to low complexity. Phosphoserine is present on Ser-215. Residues Lys-227 and Lys-261 each participate in a glycyl lysine isopeptide (Lys-Gly) (interchain with G-Cter in SUMO) cross-link. Lys-323 participates in a covalent cross-link: Glycyl lysine isopeptide (Lys-Gly) (interchain with G-Cter in SUMO2). The segment at residues 342-422 (LQLWQFLVAL…AGERYVYKFV (81 aa)) is a DNA-binding region (ETS).

It belongs to the ETS family. Post-translationally, sumoylated; enhanced upon ERK/MAP kinase pathway activation it positively regulates the transcriptional activator capacity. Sumoylation at Lys-95 probably requires phosphorylation at Ser-100. Transiently polysumoylated and desumoylated by SENP1. Sumoylation is a prerequisite to polyubiquitination which in turn increases proteasomal-mediated degradation. Probably polyubiquitinated by RNF4 and deubiquitinated by USP2. As to expression, epididymis and brain.

It localises to the nucleus. In terms of biological role, transcriptional activator. May play a role in keratinocyte differentiation. In Mus musculus (Mouse), this protein is ETS translocation variant 4 (Etv4).